The primary structure comprises 376 residues: Queuine tRNA-ribosyltransferase (376 aa).

Residue aspartate 89 is the Proton acceptor of the active site. Substrate contacts are provided by residues 89 to 93, aspartate 143, glutamine 194, and glycine 221; that span reads DSGGF. The tract at residues 252–258 is RNA binding; sequence GVGTPSN. Catalysis depends on aspartate 271, which acts as the Nucleophile. The segment at 276–280 is RNA binding; important for wobble base 34 recognition; the sequence is ARNGR. 4 residues coordinate Zn(2+): cysteine 309, cysteine 311, cysteine 314, and histidine 340.

It belongs to the queuine tRNA-ribosyltransferase family. In terms of assembly, homodimer. Within each dimer, one monomer is responsible for RNA recognition and catalysis, while the other monomer binds to the replacement base PreQ1. Zn(2+) is required as a cofactor.

It catalyses the reaction 7-aminomethyl-7-carbaguanine + guanosine(34) in tRNA = 7-aminomethyl-7-carbaguanosine(34) in tRNA + guanine. It functions in the pathway tRNA modification; tRNA-queuosine biosynthesis. Functionally, catalyzes the base-exchange of a guanine (G) residue with the queuine precursor 7-aminomethyl-7-deazaguanine (PreQ1) at position 34 (anticodon wobble position) in tRNAs with GU(N) anticodons (tRNA-Asp, -Asn, -His and -Tyr). Catalysis occurs through a double-displacement mechanism. The nucleophile active site attacks the C1' of nucleotide 34 to detach the guanine base from the RNA, forming a covalent enzyme-RNA intermediate. The proton acceptor active site deprotonates the incoming PreQ1, allowing a nucleophilic attack on the C1' of the ribose to form the product. After dissociation, two additional enzymatic reactions on the tRNA convert PreQ1 to queuine (Q), resulting in the hypermodified nucleoside queuosine (7-(((4,5-cis-dihydroxy-2-cyclopenten-1-yl)amino)methyl)-7-deazaguanosine). This is Queuine tRNA-ribosyltransferase from Clostridium acetobutylicum (strain ATCC 824 / DSM 792 / JCM 1419 / IAM 19013 / LMG 5710 / NBRC 13948 / NRRL B-527 / VKM B-1787 / 2291 / W).